Consider the following 272-residue polypeptide: Cytochrome c oxidase subunit 3 (272 aa).

A run of 7 helical transmembrane segments spans residues 20-40, 45-65, 89-109, 128-148, 166-186, 204-224, and 248-268; these read PWPL…VLFM, GGGE…FTWW, GMIL…WAFF, VVAI…LSSG, AMQG…MQGF, FYMA…FLFI, and YWHF…WWGF.

It belongs to the cytochrome c oxidase subunit 3 family. As to quaternary structure, component of the cytochrome c oxidase (complex IV, CIV), a multisubunit enzyme composed of a catalytic core of 3 subunits and several supernumerary subunits. The complex exists as a monomer or a dimer and forms supercomplexes (SCs) in the inner mitochondrial membrane with ubiquinol-cytochrome c oxidoreductase (cytochrome b-c1 complex, complex III, CIII).

The protein localises to the mitochondrion inner membrane. It catalyses the reaction 4 Fe(II)-[cytochrome c] + O2 + 8 H(+)(in) = 4 Fe(III)-[cytochrome c] + 2 H2O + 4 H(+)(out). Functionally, component of the cytochrome c oxidase, the last enzyme in the mitochondrial electron transport chain which drives oxidative phosphorylation. The respiratory chain contains 3 multisubunit complexes succinate dehydrogenase (complex II, CII), ubiquinol-cytochrome c oxidoreductase (cytochrome b-c1 complex, complex III, CIII) and cytochrome c oxidase (complex IV, CIV), that cooperate to transfer electrons derived from NADH and succinate to molecular oxygen, creating an electrochemical gradient over the inner membrane that drives transmembrane transport and the ATP synthase. Cytochrome c oxidase is the component of the respiratory chain that catalyzes the reduction of oxygen to water. Electrons originating from reduced cytochrome c in the intermembrane space (IMS) are transferred via the dinuclear copper A center (CU(A)) of subunit 2 and heme A of subunit 1 to the active site in subunit 1, a binuclear center (BNC) formed by heme A3 and copper B (CU(B)). The BNC reduces molecular oxygen to 2 water molecules using 4 electrons from cytochrome c in the IMS and 4 protons from the mitochondrial matrix. This chain is Cytochrome c oxidase subunit 3 (COX3), found in Pylaiella littoralis (Seaweed).